We begin with the raw amino-acid sequence, 507 residues long: FSD1-like protein (507 aa).

Residues 70–109 adopt a coiled-coil conformation; sequence KQEQVRKSQELQSQLSQCNNALENSEELLEFATRSLDIKE. In terms of domain architecture, COS spans 105–162; sequence LDIKEPEEFSKAARQIKDRVTMASAFRLSLKPKVSDNMTHLMVDFSQERQMLQTLKFL. One can recognise a Fibronectin type-III domain in the interval 164–268; sequence VPKAPEIDPV…DPVTLETRAL (105 aa). The B30.2/SPRY domain maps to 291 to 484; sequence DPTGGKGQES…LSTGMQVPSA (194 aa). The segment at 292 to 345 is disordered; sequence PTGGKGQESKIKGKENKGSVHVTSLKKHTSGTPSPKRTSVGSRPPAVRGSRDRF. The segment covering 298–309 has biased composition (basic and acidic residues); it reads QESKIKGKENKG. Positions 321-332 are enriched in polar residues; sequence SGTPSPKRTSVG. 2 positions are modified to phosphoserine: serine 498 and serine 501.

This chain is FSD1-like protein (Fsd1l), found in Mus musculus (Mouse).